A 500-amino-acid chain; its full sequence is Probable cytosol aminopeptidase (500 aa).

Mn(2+) is bound by residues Lys-265 and Asp-270. Residue Lys-277 is part of the active site. Positions 288, 347, and 349 each coordinate Mn(2+). The active site involves Arg-351.

The protein belongs to the peptidase M17 family. Mn(2+) is required as a cofactor.

The protein resides in the cytoplasm. It carries out the reaction Release of an N-terminal amino acid, Xaa-|-Yaa-, in which Xaa is preferably Leu, but may be other amino acids including Pro although not Arg or Lys, and Yaa may be Pro. Amino acid amides and methyl esters are also readily hydrolyzed, but rates on arylamides are exceedingly low.. The catalysed reaction is Release of an N-terminal amino acid, preferentially leucine, but not glutamic or aspartic acids.. Its function is as follows. Presumably involved in the processing and regular turnover of intracellular proteins. Catalyzes the removal of unsubstituted N-terminal amino acids from various peptides. The polypeptide is Probable cytosol aminopeptidase (Bdellovibrio bacteriovorus (strain ATCC 15356 / DSM 50701 / NCIMB 9529 / HD100)).